Consider the following 240-residue polypeptide: 2,3-bisphosphoglycerate-dependent phosphoglycerate mutase (240 aa).

Substrate is bound by residues 5-12, 18-19, Arg-57, 84-87, Lys-95, 111-112, and 180-181; these read RHGESVWN, TG, ERHY, RR, and GN. Residue His-6 is the Tele-phosphohistidine intermediate of the active site. The active-site Proton donor/acceptor is Glu-84.

This sequence belongs to the phosphoglycerate mutase family. BPG-dependent PGAM subfamily. As to quaternary structure, homodimer.

It carries out the reaction (2R)-2-phosphoglycerate = (2R)-3-phosphoglycerate. It participates in carbohydrate degradation; glycolysis; pyruvate from D-glyceraldehyde 3-phosphate: step 3/5. Functionally, catalyzes the interconversion of 2-phosphoglycerate and 3-phosphoglycerate. The chain is 2,3-bisphosphoglycerate-dependent phosphoglycerate mutase from Nitrosococcus oceani (strain ATCC 19707 / BCRC 17464 / JCM 30415 / NCIMB 11848 / C-107).